We begin with the raw amino-acid sequence, 193 residues long: dCTP deaminase (193 aa).

Residues 110-115 (RSSLAR), Asp128, 136-138 (VLE), Tyr171, Lys178, and Gln182 contribute to the dCTP site. The active-site Proton donor/acceptor is the Glu138.

The protein belongs to the dCTP deaminase family. In terms of assembly, homotrimer.

The catalysed reaction is dCTP + H2O + H(+) = dUTP + NH4(+). It functions in the pathway pyrimidine metabolism; dUMP biosynthesis; dUMP from dCTP (dUTP route): step 1/2. Catalyzes the deamination of dCTP to dUTP. The sequence is that of dCTP deaminase from Aeromonas hydrophila subsp. hydrophila (strain ATCC 7966 / DSM 30187 / BCRC 13018 / CCUG 14551 / JCM 1027 / KCTC 2358 / NCIMB 9240 / NCTC 8049).